The chain runs to 620 residues: Chaperone protein DnaK (620 aa).

Threonine 197 is modified (phosphothreonine; by autocatalysis). The tract at residues 597 to 620 (AMANKNNAEQPKKKDDDVIDAEVE) is disordered.

The protein belongs to the heat shock protein 70 family.

Functionally, acts as a chaperone. The polypeptide is Chaperone protein DnaK (Helicobacter pylori (strain G27)).